We begin with the raw amino-acid sequence, 1377 residues long: Dicer-like protein 2 (1377 aa).

The 181-residue stretch at 23–203 folds into the Helicase ATP-binding domain; sequence MFEASLKENI…MKTLESNLDS (181 aa). 36–43 serves as a coordination point for ATP; sequence MDTGTGKT. The short motif at 144 to 147 is the DEAH box element; the sequence is DEAH. The 164-residue stretch at 368–531 folds into the Helicase C-terminal domain; sequence ALINFLDKFD…AYQDEERRLR (164 aa). The region spanning 561-655 is the Dicer dsRNA-binding fold domain; the sequence is VVTHLYHFCA…LPLTKNPEMR (95 aa). 2 RNase III domains span residues 914-1052 and 1092-1275; these read RLCA…LDGG and DGDL…VDSG. Mg(2+)-binding residues include Glu-1131, Asp-1261, and Glu-1264.

It belongs to the helicase family. Dicer subfamily. It depends on Mg(2+) as a cofactor. Mn(2+) is required as a cofactor.

Its function is as follows. Dicer-like endonuclease involved in cleaving double-stranded RNA in the RNA interference (RNAi) pathway. Produces 21 to 25 bp dsRNAs (siRNAs) which target the selective destruction of homologous RNAs leading to sequence-specific suppression of gene expression, called post-transcriptional gene silencing (PTGS). Part of a broad host defense response against viral infection and transposons. This chain is Dicer-like protein 2 (dcl2), found in Aspergillus oryzae (strain ATCC 42149 / RIB 40) (Yellow koji mold).